The following is an 84-amino-acid chain: Beta-defensin 119 (84 aa).

Residues Met1–Gly21 form the signal peptide. Disulfide bonds link Cys28–Cys55, Cys35–Cys49, and Cys39–Cys56.

The protein belongs to the beta-defensin family. Abundant expression in the male reproductive tract only. Expressed abundantly in testis, while expression in epididymis decreased gradually from caput to cauda.

The protein resides in the secreted. In terms of biological role, has antibacterial activity. The sequence is that of Beta-defensin 119 (DEFB119) from Macaca mulatta (Rhesus macaque).